A 103-amino-acid polypeptide reads, in one-letter code: uncharacterized protein (103 aa).

The chain crosses the membrane as a helical span at residues 35–57 (PFVSMFQTFLEVLTATVLAFTAY).

Its subcellular location is the host membrane. This is an uncharacterized protein from Acidianus bottle-shaped virus (isolate Italy/Pozzuoli) (ABV).